Reading from the N-terminus, the 213-residue chain is Probable nicotinate-nucleotide adenylyltransferase (213 aa).

Belongs to the NadD family.

The catalysed reaction is nicotinate beta-D-ribonucleotide + ATP + H(+) = deamido-NAD(+) + diphosphate. The protein operates within cofactor biosynthesis; NAD(+) biosynthesis; deamido-NAD(+) from nicotinate D-ribonucleotide: step 1/1. Functionally, catalyzes the reversible adenylation of nicotinate mononucleotide (NaMN) to nicotinic acid adenine dinucleotide (NaAD). The sequence is that of Probable nicotinate-nucleotide adenylyltransferase from Shigella boydii serotype 4 (strain Sb227).